A 329-amino-acid polypeptide reads, in one-letter code: Malate dehydrogenase (329 aa).

An NAD(+)-binding site is contributed by 12–18 (GAAGQIG). Arginine 93 and arginine 99 together coordinate substrate. NAD(+) is bound by residues asparagine 106, glutamine 113, and 130–132 (VGN). 2 residues coordinate substrate: asparagine 132 and arginine 166. Residue histidine 191 is the Proton acceptor of the active site.

Belongs to the LDH/MDH superfamily. MDH type 2 family.

The enzyme catalyses (S)-malate + NAD(+) = oxaloacetate + NADH + H(+). Catalyzes the reversible oxidation of malate to oxaloacetate. The sequence is that of Malate dehydrogenase from Aromatoleum aromaticum (strain DSM 19018 / LMG 30748 / EbN1) (Azoarcus sp. (strain EbN1)).